We begin with the raw amino-acid sequence, 1254 residues long: DNA-directed RNA polymerase subunit beta (1254 aa).

It belongs to the RNA polymerase beta chain family. As to quaternary structure, the RNAP catalytic core consists of 2 alpha, 1 beta, 1 beta' and 1 omega subunit. When a sigma factor is associated with the core the holoenzyme is formed, which can initiate transcription.

The catalysed reaction is RNA(n) + a ribonucleoside 5'-triphosphate = RNA(n+1) + diphosphate. DNA-dependent RNA polymerase catalyzes the transcription of DNA into RNA using the four ribonucleoside triphosphates as substrates. The protein is DNA-directed RNA polymerase subunit beta of Protochlamydia amoebophila (strain UWE25).